The following is a 156-amino-acid chain: Small ribosomal subunit protein uS7 (156 aa).

Belongs to the universal ribosomal protein uS7 family. As to quaternary structure, part of the 30S ribosomal subunit. Contacts proteins S9 and S11.

Its function is as follows. One of the primary rRNA binding proteins, it binds directly to 16S rRNA where it nucleates assembly of the head domain of the 30S subunit. Is located at the subunit interface close to the decoding center, probably blocks exit of the E-site tRNA. The chain is Small ribosomal subunit protein uS7 from Lawsonia intracellularis (strain PHE/MN1-00).